Reading from the N-terminus, the 266-residue chain is Dioicin-2 (266 aa).

Cystine bridges form between cysteine 32-cysteine 263 and cysteine 85-cysteine 102. Glutamate 176 is an active-site residue.

The protein resides in the secreted. It localises to the extracellular space. It is found in the golgi apparatus. Its subcellular location is the vacuole. It carries out the reaction Endohydrolysis of the N-glycosidic bond at one specific adenosine on the 28S rRNA.. Nicks pBR322 dsDNA. Has adenine polynucleotide glycosidase activity on herring sperm ssDNA. The protein is Dioicin-2 of Phytolacca dioica (Bella sombra tree).